The sequence spans 409 residues: Broad specificity amino-acid racemase (409 aa).

Positions 1–24 (MPFRRTLLAASLALLITGQAPLYA) are cleaved as a signal peptide. A disulfide bridge links Cys-71 with Cys-97. Lys-75 (proton acceptor) is an active-site residue. N6-(pyridoxal phosphate)lysine is present on Lys-75. Residue Arg-174 participates in substrate binding. Tyr-301 functions as the Proton acceptor in the catalytic mechanism. Met-349 serves as a coordination point for substrate.

This sequence belongs to the alanine racemase family. Bsr subfamily. Pyridoxal 5'-phosphate serves as cofactor.

Its subcellular location is the periplasm. The catalysed reaction is an L-alpha-amino acid = a D-alpha-amino acid. It catalyses the reaction L-lysine = D-lysine. The enzyme catalyses L-arginine = D-arginine. It carries out the reaction L-glutamine = D-glutamine. In terms of biological role, amino-acid racemase able to utilize a broad range of substrates. Reversibly racemizes 9 of the 19 natural chiral amino acids known, including both positively charged amino acids (Lys, Arg and His) and non-beta-branched aliphatic amino acids (Ala, Leu, Met, Ser, Gln and Asn). Among these amino acids, activity is the highest with lysine and arginine, and poor or very poor with the others. Plays a primary role in the catabolism of basic amino acid, that allows P.putida strain KT2440 to grow on L-Lys and L-Arg as the sole source of carbon and nitrogen, through conversion to their respective D-enantiomers. The chain is Broad specificity amino-acid racemase from Pseudomonas putida (strain ATCC 47054 / DSM 6125 / CFBP 8728 / NCIMB 11950 / KT2440).